Reading from the N-terminus, the 379-residue chain is Queuine tRNA-ribosyltransferase (379 aa).

The active-site Proton acceptor is Asp-93. Substrate is bound by residues 93-97, Asp-147, Gln-191, and Gly-218; that span reads DSGGF. Residues 249-255 form an RNA binding region; sequence GVGKPED. The active-site Nucleophile is Asp-268. Residues 273 to 277 are RNA binding; important for wobble base 34 recognition; the sequence is TRNAR. Residues Cys-306, Cys-308, Cys-311, and His-337 each contribute to the Zn(2+) site.

It belongs to the queuine tRNA-ribosyltransferase family. Homodimer. Within each dimer, one monomer is responsible for RNA recognition and catalysis, while the other monomer binds to the replacement base PreQ1. Requires Zn(2+) as cofactor.

It carries out the reaction 7-aminomethyl-7-carbaguanine + guanosine(34) in tRNA = 7-aminomethyl-7-carbaguanosine(34) in tRNA + guanine. It participates in tRNA modification; tRNA-queuosine biosynthesis. Catalyzes the base-exchange of a guanine (G) residue with the queuine precursor 7-aminomethyl-7-deazaguanine (PreQ1) at position 34 (anticodon wobble position) in tRNAs with GU(N) anticodons (tRNA-Asp, -Asn, -His and -Tyr). Catalysis occurs through a double-displacement mechanism. The nucleophile active site attacks the C1' of nucleotide 34 to detach the guanine base from the RNA, forming a covalent enzyme-RNA intermediate. The proton acceptor active site deprotonates the incoming PreQ1, allowing a nucleophilic attack on the C1' of the ribose to form the product. After dissociation, two additional enzymatic reactions on the tRNA convert PreQ1 to queuine (Q), resulting in the hypermodified nucleoside queuosine (7-(((4,5-cis-dihydroxy-2-cyclopenten-1-yl)amino)methyl)-7-deazaguanosine). In Actinobacillus succinogenes (strain ATCC 55618 / DSM 22257 / CCUG 43843 / 130Z), this protein is Queuine tRNA-ribosyltransferase.